Here is a 485-residue protein sequence, read N- to C-terminus: Glutamyl-tRNA(Gln) amidotransferase subunit A (485 aa).

Catalysis depends on charge relay system residues Lys-79 and Ser-154. The Acyl-ester intermediate role is filled by Ser-178.

This sequence belongs to the amidase family. GatA subfamily. Heterotrimer of A, B and C subunits.

The catalysed reaction is L-glutamyl-tRNA(Gln) + L-glutamine + ATP + H2O = L-glutaminyl-tRNA(Gln) + L-glutamate + ADP + phosphate + H(+). Allows the formation of correctly charged Gln-tRNA(Gln) through the transamidation of misacylated Glu-tRNA(Gln) in organisms which lack glutaminyl-tRNA synthetase. The reaction takes place in the presence of glutamine and ATP through an activated gamma-phospho-Glu-tRNA(Gln). This chain is Glutamyl-tRNA(Gln) amidotransferase subunit A, found in Staphylococcus carnosus (strain TM300).